Consider the following 378-residue polypeptide: MLVIGLMSGTSVDGIDTALVEISGTVESPQVQLLAGETYPYSPRLRETILQVCGGEKLSIEALASLDDNIAAEFAQAALNIQKEAPKAQLIGSHGQTVFHRPPANDRLGYTVQLGRGAAIAKITRIPTISNFRAADIAQAGHGAPLVPKIDAYLLSHPTKTRCVQNIGGIGNLTYLPPRQRENWQQKIFGWDTGPGNVLIDLAVQFLSQGQQTYDHNGQWSAQGQPCSELVHKWLQEPYFQQYPPKSTGRELFSPAYLAQLREDAQAYCLSDADWLASLTDLTAISIAHSYQTFLPEMPAEVLLCGGGARNAYLRQRLLAHLGSNVKLLTTDEVGLNSDFKEAIAFALLAYWRWHNFPGNLPQVTGAKAAVLLGEIYR.

Residue 9–16 (GTSVDGID) coordinates ATP.

Belongs to the anhydro-N-acetylmuramic acid kinase family.

It catalyses the reaction 1,6-anhydro-N-acetyl-beta-muramate + ATP + H2O = N-acetyl-D-muramate 6-phosphate + ADP + H(+). It participates in amino-sugar metabolism; 1,6-anhydro-N-acetylmuramate degradation. Its pathway is cell wall biogenesis; peptidoglycan recycling. Catalyzes the specific phosphorylation of 1,6-anhydro-N-acetylmuramic acid (anhMurNAc) with the simultaneous cleavage of the 1,6-anhydro ring, generating MurNAc-6-P. Is required for the utilization of anhMurNAc either imported from the medium or derived from its own cell wall murein, and thus plays a role in cell wall recycling. This is Anhydro-N-acetylmuramic acid kinase from Microcystis aeruginosa (strain NIES-843 / IAM M-2473).